The sequence spans 229 residues: UPF0758 protein MM_2791 (229 aa).

An MPN domain is found at 106 to 228 (KISSPKDVYT…YVSLKDEGFV (123 aa)). The Zn(2+) site is built by His177, His179, and Asp190. Residues 177 to 190 (HNHPSGDPSPSRED) carry the JAMM motif motif.

This sequence belongs to the UPF0758 family.

This is UPF0758 protein MM_2791 from Methanosarcina mazei (strain ATCC BAA-159 / DSM 3647 / Goe1 / Go1 / JCM 11833 / OCM 88) (Methanosarcina frisia).